Consider the following 179-residue polypeptide: Large ribosomal subunit protein uL5 (179 aa).

The protein belongs to the universal ribosomal protein uL5 family. In terms of assembly, part of the 50S ribosomal subunit; part of the 5S rRNA/L5/L18/L25 subcomplex. Contacts the 5S rRNA and the P site tRNA. Forms a bridge to the 30S subunit in the 70S ribosome.

Functionally, this is one of the proteins that bind and probably mediate the attachment of the 5S RNA into the large ribosomal subunit, where it forms part of the central protuberance. In the 70S ribosome it contacts protein S13 of the 30S subunit (bridge B1b), connecting the 2 subunits; this bridge is implicated in subunit movement. Contacts the P site tRNA; the 5S rRNA and some of its associated proteins might help stabilize positioning of ribosome-bound tRNAs. The sequence is that of Large ribosomal subunit protein uL5 from Shewanella baltica (strain OS223).